Reading from the N-terminus, the 647-residue chain is DNA mismatch repair protein MutL (647 aa).

A compositionally biased stretch (basic and acidic residues) spans S387–E400. A disordered region spans residues S387 to K412.

It belongs to the DNA mismatch repair MutL/HexB family.

Its function is as follows. This protein is involved in the repair of mismatches in DNA. It is required for dam-dependent methyl-directed DNA mismatch repair. May act as a 'molecular matchmaker', a protein that promotes the formation of a stable complex between two or more DNA-binding proteins in an ATP-dependent manner without itself being part of a final effector complex. This is DNA mismatch repair protein MutL from Streptococcus sanguinis (strain SK36).